Consider the following 223-residue polypeptide: MKKFLPSLLLMGSVACSSNQRMNDYSQPESQSDLAPKSSTIQPQPQPLLSKTPSMSLNLLSSSGPNRQVLPSEPSNFMTLMGQNGALLTVWALAKRNWLWAYPNIYSQDFGNIRNWKMEPGKHREYFRFVNQSLGTCVEAYGNGLIHDICSLDKLAQEFELLPTDSGAVVIKSVSQGRCVTYNPVSTTFYSTVTLSVCDGATEPSRDQTWYLAPPVLEATAVN.

The N-terminal stretch at 1 to 15 (MKKFLPSLLLMGSVA) is a signal peptide. C16 is lipidated: N-palmitoyl cysteine. The S-diacylglycerol cysteine moiety is linked to residue C16. The disordered stretch occupies residues 20–48 (QRMNDYSQPESQSDLAPKSSTIQPQPQPL). Positions 91–102 (WALAKRNWLWAY) are mediates binding to target cells. The 90-residue stretch at 123 to 212 (HREYFRFVNQ…EPSRDQTWYL (90 aa)) folds into the Ricin B-type lectin domain.

As to quaternary structure, heterotrimer of 3 subunits, CdtA, CdtB and CdtC.

Its subcellular location is the cell outer membrane. CDTs are cytotoxins which induce host cell distension, growth arrest in G2/M phase, nucleus swelling, and chromatin fragmentation in HeLa cells. CdtA, along with CdtC, probably forms a heterodimeric subunit required for the delivery of CdtB. The polypeptide is Cytolethal distending toxin subunit A (cdtA) (Haemophilus ducreyi (strain 35000HP / ATCC 700724)).